We begin with the raw amino-acid sequence, 954 residues long: Lysine-specific demethylase JMJ14 (954 aa).

The segment at 1-46 (MDQLASLAESVAMEEDSEKQSIKGESSLEPDSTPSSPKITARWNPS) is disordered. Residues 29–38 (EPDSTPSSPK) show a composition bias toward polar residues. The 42-residue stretch at 56-97 (APIFYPTNEDFDDPLGYIEKLRSKAESYGICRIVPPVAWRPP) folds into the JmjN domain. The Nuclear localization signal 1 motif lies at 136-143 (RKRRRISK). The segment at 148-170 (RRKRDSGCDTASSGSSDSEGKFG) is disordered. In terms of domain architecture, JmjC spans 263 to 429 (QYSQCGWNLN…HGQNAVEGYS (167 aa)). Fe cation contacts are provided by histidine 309, glutamate 311, and histidine 397. The Nuclear localization signal 2 signature appears at 470–477 (WKRVCSED). The Zn(2+) site is built by cysteine 519, cysteine 522, cysteine 533, cysteine 535, cysteine 542, histidine 545, cysteine 550, and cysteine 552. A C5HC2 zinc finger spans residues 519–571 (CFLCFYDLHMSASSCKCSPNRFACLIHAKDLCSCESKDRYILIRHTLDELWAL). The tract at residues 641–670 (SNKEVQLKQDGDSDVNRHGHESERNHVHGI) is disordered. A compositionally biased stretch (basic and acidic residues) spans 645 to 670 (VQLKQDGDSDVNRHGHESERNHVHGI). An FYR N-terminal domain is found at 726-784 (ATNRLSLSVELLSSGSLVVKKLWCSKQAIYPKGFKSRVKFLSVLDPTNLTNYISEVLDA). The region spanning 786–876 (LLGPLFRVSV…HQLEEYWNQK (91 aa)) is the FYR C-terminal domain. The tract at residues 884–905 (EPIKEGEKDDTEKGGASDPSLD) is disordered. Basic and acidic residues predominate over residues 885–905 (PIKEGEKDDTEKGGASDPSLD).

The protein belongs to the JARID1 histone demethylase family. As to quaternary structure, interacts with NAC050 and NAC051/NAC052. Interacts with THAL in the nucleus. The cofactor is Fe(2+). Expressed in shoot apex, primary root tip, trichomes of young leaves, leaf vascular tissues, anther filaments and styles. Detected in inflorescences, leaves, stems, roots and siliques. Mostly expressed in floral organs, and, at low levels, in other organs.

It localises to the nucleus. Its subcellular location is the nucleoplasm. It carries out the reaction N(6),N(6),N(6)-trimethyl-L-lysyl(4)-[histone H3] + 2-oxoglutarate + O2 = N(6),N(6)-dimethyl-L-lysyl(4)-[histone H3] + formaldehyde + succinate + CO2. The enzyme catalyses N(6),N(6)-dimethyl-L-lysyl(4)-[histone H3] + 2-oxoglutarate + O2 = N(6)-methyl-L-lysyl(4)-[histone H3] + formaldehyde + succinate + CO2. The catalysed reaction is N(6)-methyl-L-lysyl(4)-[histone H3] + 2-oxoglutarate + O2 = L-lysyl(4)-[histone H3] + formaldehyde + succinate + CO2. It catalyses the reaction N(6),N(6),N(6)-trimethyl-L-lysyl(4)-[histone H3] + 3 2-oxoglutarate + 3 O2 = L-lysyl(4)-[histone H3] + 3 formaldehyde + 3 succinate + 3 CO2. Its function is as follows. Transcriptional repressor. Histone demethylase that demethylates 'Lys-4' (H3K4me) of histone H3 with a higher activity for H3K4me3 and H3K4me2 than H3K4me1. No activity on H3K9me3/2, H3K36me3/2 and H3K27me3/2. Function as a nocturne 'eraser' to counteract the diurnal 'writer' methylase activity of ATXR3/SDG2 thus orchestrating the circadian rhythm of histone modifications (e.g. H3K4me3) and modulating the rhythmic expression of diurnal target genes; this mechanism also relies on the circadian clock oscillators CCA1 and LHY. Involved in a negative regulation of root meristem growth upon suboptimal root growth conditions. Represses FT and TSF expression to inhibit the floral transition. Binds around the transcription start site of the FT locus. Involved in the DRM2-mediated maintenance of DNA methylation, but not required for the de novo DNA methylation. Required for demethylating histone H3K4me3 at the target of RNA silencing. Counteracts the DNA methylation of expressed transgenes; specific attenuation of transgene DNA methylation enhances the production of aberrant RNAs (e.g. uncapped and antisense) that readily induce systemic RDR6-dependent post-transcriptional transgene silencing (PTGS) spreading. Together with NAC051/NAC052 and NAC050, regulates gene expression and flowering time, probably by the promotion of RNA-mediated gene silencing. Together with JMJ16 and JMJ17, required for plant growth and development. Promotes local and systemic immunity (especially toward the bacterial pathogen Pseudomonas syringae Pst DC3000 avrRpt2) by regulating positively pathogen-induced H3K4me3 enrichment and expression of defense genes involved in salicylic acid (SA)- and pipecolic acid (Pip)-mediated defense pathways (e.g. PR1, FMO1, ALD1 and SARD4). The sequence is that of Lysine-specific demethylase JMJ14 from Arabidopsis thaliana (Mouse-ear cress).